Reading from the N-terminus, the 193-residue chain is dCTP deaminase (193 aa).

DCTP is bound by residues 110–115, aspartate 128, 136–138, tyrosine 171, lysine 178, and glutamine 182; these read RSSLAR and VLE. Glutamate 138 acts as the Proton donor/acceptor in catalysis. The disordered stretch occupies residues 174-193; the sequence is RKNAKYKDQQEAVASRISQD.

It belongs to the dCTP deaminase family. As to quaternary structure, homotrimer.

The enzyme catalyses dCTP + H2O + H(+) = dUTP + NH4(+). The protein operates within pyrimidine metabolism; dUMP biosynthesis; dUMP from dCTP (dUTP route): step 1/2. Functionally, catalyzes the deamination of dCTP to dUTP. The chain is dCTP deaminase from Shewanella sp. (strain W3-18-1).